We begin with the raw amino-acid sequence, 1728 residues long: Nebulin-related-anchoring protein (1728 aa).

Positions 4 to 64 (QACSRCGYGV…HAHNPKNNTF (61 aa)) constitute an LIM zinc-binding domain. Nebulin repeat units follow at residues 173–200 (TPAY…ERVS), 201–235 (TFTP…QQRG), 244–271 (TPAY…REMK), 313–340 (TPAY…KMKG), 345–379 (HSLA…NSKG), 386–414 (ETPQ…TQLR), 416–450 (HYDG…HDVV), 484–518 (KFSS…RNKL), 519–553 (NYTL…KTKG), 555–589 (GFEM…KMKG), 599–623 (LLHS…ESKT), 624–658 (HFNL…DYTV), 659–689 (LPED…WMRG), 699–721 (NLEQ…RVDE), 723–757 (KFTS…QSVH), 758–792 (QYTI…KQKA), 794–828 (GFEL…RSRG), 841–866 (QMSH…DTRS), 867–893 (QCHI…VGYR), 898–932 (CFTA…WMKG), 943–960 (VEQA…KYRQ), 966–1000 (KFTS…NVKH), 1001–1035 (HYTQ…RLRD), 1037–1071 (GYKL…RMKG), 1075–1109 (GSRS…HAKA), 1110–1136 (HFHL…QDYR), 1141–1175 (QHTV…FMRG), 1180–1203 (VPGT…KYRQ), 1209–1243 (KYTA…DARH), 1244–1278 (QYTM…NLRA), 1280–1314 (GYKL…KERG), 1318–1352 (GVRN…SSQA), 1353–1379 (QCHL…HDYR), 1384–1418 (EFTA…GMKG), 1425–1446 (QSPQ…KYRK), 1452–1478 (KFTT…RLYR), 1487–1521 (RYTP…QSRA), 1523–1557 (GYDF…RDRG), 1561–1595 (GYRS…KGRS), 1596–1630 (QFHS…QHTS), and 1637–1661 (LKHA…LTRG). The residue at position 203 (T203) is a Phosphothreonine. Position 1078 is a phosphoserine (S1078).

As to quaternary structure, interacts with actin, alpha-actinin, KLHL41, TLN1 and VCL. Interacts with CSRP3. In terms of tissue distribution, expressed in cardiac and skeletal muscle. Not detected in kidney, spleen, liver, brain, lung, stomach or uterus.

In terms of biological role, may be involved in anchoring the terminal actin filaments in the myofibril to the membrane and in transmitting tension from the myofibrils to the extracellular matrix. The chain is Nebulin-related-anchoring protein from Mus musculus (Mouse).